We begin with the raw amino-acid sequence, 159 residues long: uncharacterized protein (159 aa).

Transmembrane regions (helical) follow at residues F17–S37, W44–I64, and F67–A87.

The protein localises to the membrane. This is an uncharacterized protein from Saccharomyces cerevisiae (strain ATCC 204508 / S288c) (Baker's yeast).